Here is a 270-residue protein sequence, read N- to C-terminus: Tryptophan synthase alpha chain (270 aa).

Active-site proton acceptor residues include glutamate 49 and aspartate 60.

The protein belongs to the TrpA family. In terms of assembly, tetramer of two alpha and two beta chains.

It carries out the reaction (1S,2R)-1-C-(indol-3-yl)glycerol 3-phosphate + L-serine = D-glyceraldehyde 3-phosphate + L-tryptophan + H2O. It participates in amino-acid biosynthesis; L-tryptophan biosynthesis; L-tryptophan from chorismate: step 5/5. Functionally, the alpha subunit is responsible for the aldol cleavage of indoleglycerol phosphate to indole and glyceraldehyde 3-phosphate. The chain is Tryptophan synthase alpha chain from Thermobifida fusca (strain YX).